A 394-amino-acid chain; its full sequence is Elongation factor Tu (394 aa).

Positions 10–204 constitute a tr-type G domain; it reads KPHINVGTIG…FLDSYIPEPK (195 aa). The segment at 19–26 is G1; that stretch reads GHVDHGKT. GTP is bound at residue 19-26; the sequence is GHVDHGKT. Position 26 (Thr-26) interacts with Mg(2+). Positions 60–64 are G2; that stretch reads GITIN. Positions 81-84 are G3; that stretch reads DCPG. Residues 81 to 85 and 136 to 139 each bind GTP; these read DCPGH and NKCD. The G4 stretch occupies residues 136 to 139; sequence NKCD. The interval 174–176 is G5; it reads SAL.

It belongs to the TRAFAC class translation factor GTPase superfamily. Classic translation factor GTPase family. EF-Tu/EF-1A subfamily. As to quaternary structure, monomer.

The protein localises to the cytoplasm. The catalysed reaction is GTP + H2O = GDP + phosphate + H(+). In terms of biological role, GTP hydrolase that promotes the GTP-dependent binding of aminoacyl-tRNA to the A-site of ribosomes during protein biosynthesis. The sequence is that of Elongation factor Tu from Buchnera aphidicola subsp. Acyrthosiphon pisum (strain 5A).